Consider the following 196-residue polypeptide: Fucoxanthin-chlorophyll a-c binding protein A, chloroplastic (196 aa).

The N-terminal 31 residues, 1–31 (MKFAVFASLLASRAAFAPAQQSARTSVATNM), are a transit peptide targeting the chloroplast. Transmembrane regions (helical) follow at residues 73–94 (ICML…PGDI), 114–134 (VPGA…IAVM), and 174–196 (GRAA…SILP).

It belongs to the fucoxanthin chlorophyll protein family. The LHC complex of chromophytic algae is composed of fucoxanthin, chlorophyll A and C bound non-covalently by fucoxanthin chlorophyll proteins (FCPs). The ratio of the pigments in LHC; fucoxanthin: chlorophyll C: chlorophyll A; (0.6-1): (0.1-0.3): (1).

The protein localises to the plastid. It localises to the chloroplast thylakoid membrane. The light-harvesting complex (LHC) functions as a light receptor, it captures and delivers excitation energy to photosystems with which it is closely associated. Energy is transferred from the carotenoid and chlorophyll C (or B) to chlorophyll A and the photosynthetic reaction centers where it is used to synthesize ATP and reducing power. This chain is Fucoxanthin-chlorophyll a-c binding protein A, chloroplastic (FCPA), found in Phaeodactylum tricornutum (Diatom).